We begin with the raw amino-acid sequence, 587 residues long: Beta-(1--&gt;2)glucan export ATP-binding/permease protein NdvA (587 aa).

Residues 21 to 301 (VSLVVIANIV…MRQFATQIFE (281 aa)) enclose the ABC transmembrane type-1 domain. Helical transmembrane passes span 23–43 (LVVI…ILFG), 57–77 (PILF…VLVS), 126–146 (LFGL…ALAL), 158–178 (LSAV…VVMS), 248–268 (MAST…VQSG), and 272–292 (IGDV…LDLM). The ABC transporter domain maps to 335–569 (IEFRDVSFGF…NGRFAALLRA (235 aa)). 368-375 (GPTGAGKT) is a binding site for ATP.

This sequence belongs to the ABC transporter superfamily. Beta-(1--&gt;2)glucan exporter (TC 3.A.1.108.1) family. In terms of assembly, homodimer.

Its subcellular location is the cell inner membrane. It catalyses the reaction [(1-&gt;2)-beta-D-glucosyl](n)(in) + ATP + H2O = [(1-&gt;2)-beta-D-glucosyl](n)(out) + ADP + phosphate + H(+). Its function is as follows. Involved in beta-(1--&gt;2)glucan export. Transmembrane domains (TMD) form a pore in the inner membrane and the ATP-binding domain (NBD) is responsible for energy generation. This Rhizobium etli (strain ATCC 51251 / DSM 11541 / JCM 21823 / NBRC 15573 / CFN 42) protein is Beta-(1--&gt;2)glucan export ATP-binding/permease protein NdvA.